A 215-amino-acid chain; its full sequence is 3-demethoxyubiquinol 3-hydroxylase (215 aa).

The Fe cation site is built by E64, E94, H97, E146, E178, and H181.

It belongs to the COQ7 family. Requires Fe cation as cofactor.

The protein localises to the cell membrane. The enzyme catalyses a 5-methoxy-2-methyl-3-(all-trans-polyprenyl)benzene-1,4-diol + AH2 + O2 = a 3-demethylubiquinol + A + H2O. It functions in the pathway cofactor biosynthesis; ubiquinone biosynthesis. In terms of biological role, catalyzes the hydroxylation of 2-nonaprenyl-3-methyl-6-methoxy-1,4-benzoquinol during ubiquinone biosynthesis. This Ectopseudomonas mendocina (strain ymp) (Pseudomonas mendocina) protein is 3-demethoxyubiquinol 3-hydroxylase.